Here is a 232-residue protein sequence, read N- to C-terminus: 2,3-bisphosphoglycerate-dependent phosphoglycerate mutase (232 aa).

Substrate-binding positions include 10-17, 23-24, R62, 89-92, K100, 116-117, and 186-187; these read RHGESQWN, TG, ERHY, RR, and GN. Catalysis depends on H11, which acts as the Tele-phosphohistidine intermediate. The active-site Proton donor/acceptor is the E89.

This sequence belongs to the phosphoglycerate mutase family. BPG-dependent PGAM subfamily. In terms of assembly, homodimer.

The catalysed reaction is (2R)-2-phosphoglycerate = (2R)-3-phosphoglycerate. It functions in the pathway carbohydrate degradation; glycolysis; pyruvate from D-glyceraldehyde 3-phosphate: step 3/5. Its function is as follows. Catalyzes the interconversion of 2-phosphoglycerate and 3-phosphoglycerate. The sequence is that of 2,3-bisphosphoglycerate-dependent phosphoglycerate mutase from Blochmanniella pennsylvanica (strain BPEN).